The primary structure comprises 476 residues: Probable G-protein coupled receptor No9 (476 aa).

At 1-36 the chain is on the extracellular side; the sequence is MEGPPLSPAPADNVTLNVSCGRPATLFDWADHRLIS. 2 N-linked (GlcNAc...) asparagine glycosylation sites follow: Asn13 and Asn17. Residues 37 to 60 form a helical membrane-spanning segment; sequence LLALAFLNLMVVAGNLLVVMAVFV. The Cytoplasmic segment spans residues 61 to 69; it reads HSKLRTVTN. A helical transmembrane segment spans residues 70 to 93; the sequence is LFIVSLACADLLVGMLVLPFSATL. The Extracellular segment spans residues 94-103; that stretch reads EVLDVWLYGD. A helical membrane pass occupies residues 104–127; that stretch reads VWCSVWLAVDVWMCTSSILNLCAI. A disulfide bridge links Cys106 with Cys192. The Cytoplasmic segment spans residues 128 to 152; the sequence is SLDRYLAVSQPISYPSLMSTRRAKQ. The helical transmembrane segment at 153–172 threads the bilayer; it reads LIAAVWVLSFVICFPPLVGW. At 173–200 the chain is on the extracellular side; sequence NDRPGTLIGSRGSSACRLTCELTNERGY. The helical transmembrane segment at 201-221 threads the bilayer; that stretch reads VIYSALGSFFLPSTVMLFFYG. Over 222-375 the chain is Cytoplasmic; that stretch reads RIYRTAVSTT…FRMETKAAKT (154 aa). The span at 266–278 shows a compositional bias: low complexity; sequence AAAGGARAHGQVR. Disordered regions lie at residues 266-293 and 317-351; these read AAAG…NKPS and DSRP…PRFI. A helical membrane pass occupies residues 376–396; sequence VGIIVGLFILCWLPFFVCYLV. At 397–406 the chain is on the extracellular side; it reads RGFCADCVPP. The chain crosses the membrane as a helical span at residues 407 to 430; the sequence is LLFSVFFWLGYCNSAVNPCVYALC. Topologically, residues 431–476 are cytoplasmic; that stretch reads SRDFRFAFSSILCKCVCRRGAMERRFRRTLLVGNRSQTEEDCEVAD.

It belongs to the G-protein coupled receptor 1 family.

Its subcellular location is the cell membrane. Functionally, orphan G-protein coupled receptor. This chain is Probable G-protein coupled receptor No9, found in Amphibalanus amphitrite (Striped barnacle).